The chain runs to 85 residues: Small ribosomal subunit protein bS18 (85 aa).

The protein belongs to the bacterial ribosomal protein bS18 family. Part of the 30S ribosomal subunit. Forms a tight heterodimer with protein bS6.

Its function is as follows. Binds as a heterodimer with protein bS6 to the central domain of the 16S rRNA, where it helps stabilize the platform of the 30S subunit. In Helicobacter pylori (strain P12), this protein is Small ribosomal subunit protein bS18.